A 128-amino-acid chain; its full sequence is Deoxycytidylate deaminase (128 aa).

Residues 5-128 (DWDEYFLGIA…IERVVYPKES (124 aa)) form the CMP/dCMP-type deaminase domain. His-81 contributes to the Zn(2+) binding site. The active-site Proton donor is Glu-83. 2 residues coordinate Zn(2+): Cys-107 and Cys-110.

It belongs to the cytidine and deoxycytidylate deaminase family.

The enzyme catalyses dCMP + H2O + H(+) = dUMP + NH4(+). This Mycobacterium (Mycobacteriophage D29) protein is Deoxycytidylate deaminase (36.1).